Here is a 181-residue protein sequence, read N- to C-terminus: Probable N-acetyltransferase YjcK (181 aa).

Positions 7 to 172 constitute an N-acetyltransferase domain; the sequence is IYVRPLEVTD…NGVWEDHQVL (166 aa).

Belongs to the acetyltransferase family. RimJ subfamily.

The catalysed reaction is an N-terminal L-alpha-aminoacyl-[protein] + acetyl-CoA = N-terminal N(alpha)-acetyl-L-alpha-aminoacyl-[protein] + CoA + H(+). Its function is as follows. Probable N-terminal protein acetyltransferase. This is Probable N-acetyltransferase YjcK (yjcK) from Bacillus subtilis (strain 168).